Consider the following 805-residue polypeptide: Transducer protein BasT (805 aa).

2 helical membrane-spanning segments follow: residues 25 to 45 and 296 to 316; these read FNVLLLVVVIIVAAAGGYIHL and NLAGLVVVALVGLLLVGLTVG. 2 consecutive HAMP domains span residues 317 to 370 and 437 to 490; these read RRTS…TAAS and ERLE…ATLA. The 237-residue stretch at 509–745 folds into the Methyl-accepting transducer domain; the sequence is SAAEIRSASD…EVVTMIDEVT (237 aa). A disordered region spans residues 513–532; sequence IRSASDQVSESVQDISADAD. Residues 516 to 526 show a composition bias toward polar residues; the sequence is ASDQVSESVQD. Glutamate methyl ester (Glu) occurs at positions 554, 736, and 763. Positions 752–779 are disordered; that stretch reads ATESQQVSAAAEEQAASVSEVAGRADDL. Residues 754 to 773 are compositionally biased toward low complexity; the sequence is ESQQVSAAAEEQAASVSEVA.

The protein belongs to the methyl-accepting chemotaxis (MCP) protein family. In terms of assembly, interacts with CheA, CheY, CheW1 and CheW2. Methylated by CheR.

Its subcellular location is the cell membrane. Mediates chemotaxis towards five attractant amino acids (leucine, isoleucine, valine, methionine and cysteine). Probably transduces the signal from the substrate-binding protein BasB to the histidine kinase CheA. The sequence is that of Transducer protein BasT (basT) from Halobacterium salinarum (strain ATCC 29341 / DSM 671 / R1).